The following is a 127-amino-acid chain: Large ribosomal subunit protein uL22 (127 aa).

It belongs to the universal ribosomal protein uL22 family. Part of the 50S ribosomal subunit.

This protein binds specifically to 23S rRNA; its binding is stimulated by other ribosomal proteins, e.g. L4, L17, and L20. It is important during the early stages of 50S assembly. It makes multiple contacts with different domains of the 23S rRNA in the assembled 50S subunit and ribosome. Its function is as follows. The globular domain of the protein is located near the polypeptide exit tunnel on the outside of the subunit, while an extended beta-hairpin is found that lines the wall of the exit tunnel in the center of the 70S ribosome. The chain is Large ribosomal subunit protein uL22 from Methylorubrum extorquens (strain CM4 / NCIMB 13688) (Methylobacterium extorquens).